Consider the following 215-residue polypeptide: 3-demethoxyubiquinol 3-hydroxylase (215 aa).

Fe cation-binding residues include glutamate 64, glutamate 94, histidine 97, glutamate 146, glutamate 178, and histidine 181.

Belongs to the COQ7 family. Fe cation is required as a cofactor.

It is found in the cell membrane. It catalyses the reaction a 5-methoxy-2-methyl-3-(all-trans-polyprenyl)benzene-1,4-diol + AH2 + O2 = a 3-demethylubiquinol + A + H2O. The protein operates within cofactor biosynthesis; ubiquinone biosynthesis. Functionally, catalyzes the hydroxylation of 2-nonaprenyl-3-methyl-6-methoxy-1,4-benzoquinol during ubiquinone biosynthesis. The polypeptide is 3-demethoxyubiquinol 3-hydroxylase (Stutzerimonas stutzeri (strain A1501) (Pseudomonas stutzeri)).